Reading from the N-terminus, the 160-residue chain is Transcription elongation factor GreA (160 aa).

Residues 2-81 (AEKKNILTYE…KNAEVVVEDE (80 aa)) are a coiled coil. The interval 36–55 (KEAREQGDLSENAEYDAAKD) is disordered.

The protein belongs to the GreA/GreB family.

In terms of biological role, necessary for efficient RNA polymerase transcription elongation past template-encoded arresting sites. The arresting sites in DNA have the property of trapping a certain fraction of elongating RNA polymerases that pass through, resulting in locked ternary complexes. Cleavage of the nascent transcript by cleavage factors such as GreA or GreB allows the resumption of elongation from the new 3'terminus. GreA releases sequences of 2 to 3 nucleotides. The polypeptide is Transcription elongation factor GreA (Lachnoclostridium phytofermentans (strain ATCC 700394 / DSM 18823 / ISDg) (Clostridium phytofermentans)).